The following is a 440-amino-acid chain: Phosphatidylcholine-sterol acyltransferase (440 aa).

The signal sequence occupies residues 1–24 (MGLPGSPWQWVLLLLGLLLPPATS). N-linked (GlcNAc...) asparagine glycosylation occurs at asparagine 44. A disulfide bond links cysteine 74 and cysteine 98. A glycan (N-linked (GlcNAc...) asparagine) is linked at asparagine 108. Serine 205 (nucleophile) is an active-site residue. Asparagine 296 is a glycosylation site (N-linked (GlcNAc...) asparagine). A disulfide bridge connects residues cysteine 337 and cysteine 380. The active-site Charge relay system is aspartate 369. A glycan (N-linked (GlcNAc...) asparagine) is linked at asparagine 397. Histidine 401 (charge relay system) is an active-site residue. The N-linked (GlcNAc...) asparagine glycan is linked to asparagine 408.

It belongs to the AB hydrolase superfamily. Lipase family. In terms of tissue distribution, detected in blood plasma (at protein level).

The protein localises to the secreted. It carries out the reaction a sterol + a 1,2-diacyl-sn-glycero-3-phosphocholine = a sterol ester + a 1-acyl-sn-glycero-3-phosphocholine. The enzyme catalyses a 1-O-alkyl-2-acetyl-sn-glycero-3-phosphocholine + H2O = a 1-O-alkyl-sn-glycero-3-phosphocholine + acetate + H(+). It catalyses the reaction 1-hexadecanoyl-2-(9Z,12Z-octadecadienoyl)-sn-glycero-3-phosphocholine + H2O = (9Z,12Z)-octadecadienoate + 1-hexadecanoyl-sn-glycero-3-phosphocholine + H(+). The catalysed reaction is 1-hexadecanoyl-2-(5Z,8Z,11Z,14Z-eicosatetraenoyl)-sn-glycero-3-phosphocholine + H2O = 1-hexadecanoyl-sn-glycero-3-phosphocholine + (5Z,8Z,11Z,14Z)-eicosatetraenoate + H(+). It carries out the reaction 1-hexadecanoyl-2-(5Z,8Z,11Z,14Z-eicosatetraenoyl)-sn-glycero-3-phosphocholine + cholesterol = cholesteryl (5Z,8Z,11Z,14Z)-eicosatetraenoate + 1-hexadecanoyl-sn-glycero-3-phosphocholine. The enzyme catalyses 1-hexadecanoyl-2-(9Z-octadecenoyl)-sn-glycero-3-phosphocholine + cholesterol = cholesteryl (9Z-octadecenoate) + 1-hexadecanoyl-sn-glycero-3-phosphocholine. It catalyses the reaction a 1-hexadecanoyl-2-acyl-sn-glycero-3-phosphocholine + (24S)-hydroxycholesterol = (24S)-24-hydroxycholesterol ester + 1-hexadecanoyl-sn-glycero-3-phosphocholine. The catalysed reaction is (24S)-hydroxycholesterol + 1-hexadecanoyl-2-(9Z,12Z-octadecadienoyl)-sn-glycero-3-phosphocholine = (24S)-hydroxycholesterol 3-linoleoate + 1-hexadecanoyl-sn-glycero-3-phosphocholine. It carries out the reaction 1-hexadecanoyl-2-(8Z,11Z,14Z-eicosatrienoyl)-sn-glycero-3-phosphocholine + cholesterol = cholesteryl (8Z,11Z,14Z)-eicosatrienoate + 1-hexadecanoyl-sn-glycero-3-phosphocholine. The enzyme catalyses 1-hexadecanoyl-2-(5Z,8Z,11Z-eicosatrienoyl)-sn-glycero-3-phosphocholine + cholesterol = cholesteryl (5Z,8Z,11Z)-eicosatrienoate + 1-hexadecanoyl-sn-glycero-3-phosphocholine. It catalyses the reaction 1-hexadecanoyl-2-(5Z,8Z,11Z,14Z,17Z-eicosapentaenoyl)-sn-glycero-3-phosphocholine + cholesterol = (5Z,8Z,11Z,14Z,17Z-eicosapentaenoyl)-cholesterol + 1-hexadecanoyl-sn-glycero-3-phosphocholine. The catalysed reaction is 1-hexadecanoyl-2-(9Z,12Z-octadecadienoyl)-sn-glycero-3-phosphocholine + cholesterol = cholesteryl (9Z,12Z)-octadecadienoate + 1-hexadecanoyl-sn-glycero-3-phosphocholine. It carries out the reaction 1-hexadecanoyl-2-(6Z,9Z,12Z-octadecatrienoyl)-sn-glycero-3-phosphocholine + cholesterol = (6Z,9Z,12Z-octadecatrienoyl)-cholesterol + 1-hexadecanoyl-sn-glycero-3-phosphocholine. The enzyme catalyses 1-hexadecanoyl-2-(11Z,14Z,17Z-eicosatrienoyl)-sn-glycero-3-phosphocholine + cholesterol = (11Z,14Z,17Z-eicosatrienoyl)-cholesterol + 1-hexadecanoyl-sn-glycero-3-phosphocholine. It catalyses the reaction 1-hexadecanoyl-2-(9Z,12Z,15Z-octadecatrienoyl)-sn-glycero-3-phosphocholine + cholesterol = (9Z,12Z,15Z-octadecatrienoyl)-cholesterol + 1-hexadecanoyl-sn-glycero-3-phosphocholine. The catalysed reaction is a 1-O-alkyl-2-acetyl-sn-glycero-3-phosphocholine + 1-hexadecanoyl-sn-glycero-3-phosphocholine = 1-hexadecanoyl-2-acetyl-sn-glycero-3-phosphocholine + a 1-O-alkyl-sn-glycero-3-phosphocholine. Its function is as follows. Central enzyme in the extracellular metabolism of plasma lipoproteins. Synthesized mainly in the liver and secreted into plasma where it converts cholesterol and phosphatidylcholines (lecithins) to cholesteryl esters and lysophosphatidylcholines on the surface of high and low density lipoproteins (HDLs and LDLs). The cholesterol ester is then transported back to the liver. Also produced in the brain by primary astrocytes, and esterifies free cholesterol on nascent APOE-containing lipoproteins secreted from glia and influences cerebral spinal fluid (CSF) APOE- and APOA1 levels. Together with APOE and the cholesterol transporter ABCA1, plays a key role in the maturation of glial-derived, nascent lipoproteins. Required for remodeling high-density lipoprotein particles into their spherical forms. Has a preference for plasma 16:0-18:2 or 18:O-18:2 phosphatidylcholines. Catalyzes the hydrolysis of 1-O-alkyl-2-acetyl-sn-glycero-3-phosphocholine (platelet-activating factor or PAF) to 1-O-alkyl-sn-glycero-3-phosphocholine (lyso-PAF). Also catalyzes the transfer of the acetate group from PAF to 1-hexadecanoyl-sn-glycero-3-phosphocholine forming lyso-PAF. Catalyzes the esterification of (24S)-hydroxycholesterol (24(S)OH-C), also known as cerebrosterol to produce 24(S)OH-C monoesters. In Rattus norvegicus (Rat), this protein is Phosphatidylcholine-sterol acyltransferase (Lcat).